Here is a 628-residue protein sequence, read N- to C-terminus: 3-hydroxy-3-methylglutaryl-coenzyme A reductase 2 (628 aa).

Transmembrane regions (helical) follow at residues 38-58 and 78-98; these read PLYL…YFLL and EIVA…FFGI. The segment at 99 to 212 is linker; sequence DFVQSLIIRP…HEKTVIVTTE (114 aa). Residue N153 is glycosylated (N-linked (GlcNAc...) asparagine). The interval 213 to 628 is catalytic; sequence EDEEIIKSVV…SSKDMSNLSS (416 aa). E307 serves as the catalytic Charge relay system. A glycan (N-linked (GlcNAc...) asparagine) is linked at N371. The active-site Charge relay system is K439. N484 carries an N-linked (GlcNAc...) asparagine glycan. D515 (charge relay system) is an active-site residue. The Proton donor role is filled by H613. N-linked (GlcNAc...) asparagine glycosylation is found at N617 and N625.

The protein belongs to the HMG-CoA reductase family.

The protein localises to the endoplasmic reticulum membrane. The protein resides in the mitochondrion membrane. It is found in the plastid membrane. The catalysed reaction is (R)-mevalonate + 2 NADP(+) + CoA = (3S)-3-hydroxy-3-methylglutaryl-CoA + 2 NADPH + 2 H(+). Its pathway is metabolic intermediate biosynthesis; (R)-mevalonate biosynthesis; (R)-mevalonate from acetyl-CoA: step 3/3. Catalyzes the synthesis of mevalonate. The specific precursor of all isoprenoid compounds present in plants. This chain is 3-hydroxy-3-methylglutaryl-coenzyme A reductase 2 (HMG2), found in Gossypium hirsutum (Upland cotton).